The primary structure comprises 252 residues: Small ribosomal subunit protein eS4 (252 aa).

In terms of domain architecture, S4 RNA-binding spans 43–106; sequence LPLLILVRDM…NKYYRVIPVP (64 aa).

This sequence belongs to the eukaryotic ribosomal protein eS4 family.

The polypeptide is Small ribosomal subunit protein eS4 (Desulfurococcus amylolyticus (strain DSM 18924 / JCM 16383 / VKM B-2413 / 1221n) (Desulfurococcus kamchatkensis)).